Reading from the N-terminus, the 218-residue chain is Cytochrome b6 (218 aa).

A helical transmembrane segment spans residues 35-55 (IFYCLGGITLVCFLIQFATGF). C38 serves as a coordination point for heme c. H89 and H103 together coordinate heme b. The next 3 membrane-spanning stretches (helical) occupy residues 93–113 (ASMM…TGGF), 119–139 (LTWV…VTGY), and 189–209 (LHTF…FLMI). Residues H190 and H205 each contribute to the heme b site.

The protein belongs to the cytochrome b family. PetB subfamily. In terms of assembly, the 4 large subunits of the cytochrome b6-f complex are cytochrome b6, subunit IV (17 kDa polypeptide, PetD), cytochrome f and the Rieske protein, while the 4 small subunits are PetG, PetL, PetM and PetN. The complex functions as a dimer. Requires heme b as cofactor. Heme c is required as a cofactor.

It is found in the cellular thylakoid membrane. Component of the cytochrome b6-f complex, which mediates electron transfer between photosystem II (PSII) and photosystem I (PSI), cyclic electron flow around PSI, and state transitions. This Synechococcus sp. (strain CC9902) protein is Cytochrome b6.